The chain runs to 397 residues: Phosphoglycerate kinase (397 aa).

Residues 22-24 (DYN), Arg38, 61-64 (HLGR), Arg119, and Arg152 each bind substrate. Residues Lys203, Gly294, Glu325, and 351 to 354 (GGDT) each bind ATP.

The protein belongs to the phosphoglycerate kinase family. Monomer.

The protein resides in the cytoplasm. The catalysed reaction is (2R)-3-phosphoglycerate + ATP = (2R)-3-phospho-glyceroyl phosphate + ADP. The protein operates within carbohydrate degradation; glycolysis; pyruvate from D-glyceraldehyde 3-phosphate: step 2/5. The sequence is that of Phosphoglycerate kinase (pgk) from Aquifex aeolicus (strain VF5).